Here is a 212-residue protein sequence, read N- to C-terminus: MTQLADLRRSYVLGSLSETDVAPDPMSQFKRWFDEAVTAKLPEPNAMTLATVDADGQPSARIVLLKGIDDRGFTFFTNYESRKGLDLAANPRAALLFHWVQLERQVRVEGRVEKVSDDESDAYFATRPLGSRVGAWASAQSREVPGRDVLEQREQEYRSKFGENPPRPPHWGGYRLVPTALEFWQGRPSRLHDRIAFRLQPGGDWQIVRLSP.

Residues 8 to 11 (RRSY) and K66 each bind substrate. FMN-binding positions include 61 to 66 (RIVLLK), 76 to 77 (FT), R82, K83, and Q105. Positions 123, 127, and 131 each coordinate substrate. Residues 140–141 (QS) and W184 each bind FMN. 190–192 (RLH) serves as a coordination point for substrate. R194 lines the FMN pocket.

Belongs to the pyridoxamine 5'-phosphate oxidase family. Homodimer. It depends on FMN as a cofactor.

The enzyme catalyses pyridoxamine 5'-phosphate + O2 + H2O = pyridoxal 5'-phosphate + H2O2 + NH4(+). The catalysed reaction is pyridoxine 5'-phosphate + O2 = pyridoxal 5'-phosphate + H2O2. Its pathway is cofactor metabolism; pyridoxal 5'-phosphate salvage; pyridoxal 5'-phosphate from pyridoxamine 5'-phosphate: step 1/1. The protein operates within cofactor metabolism; pyridoxal 5'-phosphate salvage; pyridoxal 5'-phosphate from pyridoxine 5'-phosphate: step 1/1. In terms of biological role, catalyzes the oxidation of either pyridoxine 5'-phosphate (PNP) or pyridoxamine 5'-phosphate (PMP) into pyridoxal 5'-phosphate (PLP). The sequence is that of Pyridoxine/pyridoxamine 5'-phosphate oxidase from Cupriavidus necator (strain ATCC 17699 / DSM 428 / KCTC 22496 / NCIMB 10442 / H16 / Stanier 337) (Ralstonia eutropha).